Consider the following 619-residue polypeptide: MLLSWLTVLGAGMVVLHFLQKLLFPYFWDDFWFVLKVVLIIIRLKKYEKRGELVTVLDKFLSHAKRQPRKPFIIYEGDIYTYQDVDKRSSRVAHVFLNHSSLKKGDTVALLMSNEPDFVHVWFGLAKLGCVVAFLNTNIRSNSLLNCIRACGPRALVVGADLLGTVEEILPSLSENISVWGMKDSVPQGVISLKEKLSTSPDEPVPRSHHVVSLLKSTCLYIFTSGTTGLPKAAVISQLQVLRGSAVLWAFGCTAHDIVYITLPLYHSSAAILGISGCVELGATCVLKKKFSASQFWSDCKKYDVTVFQYIGELCRYLCKQSKREGEKDHKVRLAIGNGIRSDVWREFLDRFGNIKVCELYAATESSISFMNYTGRIGAIGRTNLFYKLLSTFDLIKYDFQKDEPMRNEQGWCIHVKKGEPGLLISRVNAKNPFFGYAGPYKHTKDKLLCDVFKKGDVYLNTGDLIVQDQDNFLYFWDRTGDTFRWKGENVATTEVADVIGMLDFIQEANVYGVAISGYEGRAGMASIILKPNTSLDLEKVYEQVVTFLPAYACPRFLRIQEKMEATGTFKLLKHQLVEDGFNPLKISEPLYFMDNLKKSYVLLTRELYDQIMLGEIKL.

The next 2 membrane-spanning stretches (helical) occupy residues 22 to 42 (LLFP…LIII) and 119 to 139 (VHVW…NTNI). 221-232 (YIFTSGTTGLPK) is an AMP binding site.

This sequence belongs to the ATP-dependent AMP-binding enzyme family. Strongly expressed in heart and localizes to cardiac myocytes. Expressed at moderate levels in placenta, testis, and adrenal glands. Expressed at very low levels in kidney, bladder and uterus.

The protein resides in the cell membrane. Its subcellular location is the sarcolemma. The enzyme catalyses a fatty acid(in) = a fatty acid(out). It carries out the reaction hexadecanoate(out) = hexadecanoate(in). The catalysed reaction is (9Z)-octadecenoate(out) = (9Z)-octadecenoate(in). It catalyses the reaction (9Z,12Z)-octadecadienoate(out) = (9Z,12Z)-octadecadienoate(in). The enzyme catalyses a very long-chain fatty acid + ATP + CoA = a very long-chain fatty acyl-CoA + AMP + diphosphate. It carries out the reaction tetracosanoate + ATP + CoA = tetracosanoyl-CoA + AMP + diphosphate. The catalysed reaction is a long-chain fatty acid + ATP + CoA = a long-chain fatty acyl-CoA + AMP + diphosphate. It catalyses the reaction (5Z,8Z,11Z,14Z)-eicosatetraenoate + ATP + CoA = (5Z,8Z,11Z,14Z)-eicosatetraenoyl-CoA + AMP + diphosphate. The enzyme catalyses (9Z)-octadecenoate + ATP + CoA = (9Z)-octadecenoyl-CoA + AMP + diphosphate. In terms of biological role, mediates the import of long-chain fatty acids (LCFA) into the cell by facilitating their transport at the plasma membrane. Also functions as an acyl-CoA ligase catalyzing the ATP-dependent formation of fatty acyl-CoA using LCFA and very-long-chain fatty acids (VLCFA) as substrates. Plays a pivotal role in regulating available LCFA substrates from exogenous sources in tissues undergoing high levels of beta-oxidation such as the heart. This Homo sapiens (Human) protein is Long-chain fatty acid transport protein 6 (SLC27A6).